Reading from the N-terminus, the 263-residue chain is Taurine import ATP-binding protein TauB (263 aa).

The ABC transporter domain occupies 4 to 235 (LTAEAISLSF…RYAAGETVRS (232 aa)). 40–47 (GPSGCGKS) lines the ATP pocket.

This sequence belongs to the ABC transporter superfamily. Taurine importer (TC 3.A.1.17.1) family. The complex is composed of two ATP-binding proteins (TauB), two transmembrane proteins (TauC) and a solute-binding protein (TauA).

Its subcellular location is the cell inner membrane. The catalysed reaction is taurine(out) + ATP + H2O = taurine(in) + ADP + phosphate + H(+). Part of the ABC transporter complex TauABC involved in taurine import. Responsible for energy coupling to the transport system. The polypeptide is Taurine import ATP-binding protein TauB (Pseudomonas aeruginosa (strain UCBPP-PA14)).